The primary structure comprises 428 residues: Enolase (428 aa).

Gln-163 is a (2R)-2-phosphoglycerate binding site. Glu-205 acts as the Proton donor in catalysis. Mg(2+) contacts are provided by Asp-242, Glu-286, and Asp-313. (2R)-2-phosphoglycerate contacts are provided by Lys-338, Arg-367, Ser-368, and Lys-389. The Proton acceptor role is filled by Lys-338.

It belongs to the enolase family. The cofactor is Mg(2+).

It localises to the cytoplasm. It is found in the secreted. Its subcellular location is the cell surface. It carries out the reaction (2R)-2-phosphoglycerate = phosphoenolpyruvate + H2O. It functions in the pathway carbohydrate degradation; glycolysis; pyruvate from D-glyceraldehyde 3-phosphate: step 4/5. Catalyzes the reversible conversion of 2-phosphoglycerate (2-PG) into phosphoenolpyruvate (PEP). It is essential for the degradation of carbohydrates via glycolysis. In Acidovorax sp. (strain JS42), this protein is Enolase.